We begin with the raw amino-acid sequence, 155 residues long: 3-hydroxyacyl-[acyl-carrier-protein] dehydratase FabZ (155 aa).

His-58 is a catalytic residue.

Belongs to the thioester dehydratase family. FabZ subfamily.

It localises to the cytoplasm. It carries out the reaction a (3R)-hydroxyacyl-[ACP] = a (2E)-enoyl-[ACP] + H2O. Involved in unsaturated fatty acids biosynthesis. Catalyzes the dehydration of short chain beta-hydroxyacyl-ACPs and long chain saturated and unsaturated beta-hydroxyacyl-ACPs. In Rhizobium johnstonii (strain DSM 114642 / LMG 32736 / 3841) (Rhizobium leguminosarum bv. viciae), this protein is 3-hydroxyacyl-[acyl-carrier-protein] dehydratase FabZ.